Reading from the N-terminus, the 130-residue chain is MRMYSSDAHERPPSPSLGTTPPHPLPPTGSPRPRQDSAAGNSEEREPRGLRRASGVGSSCKRPTVCMGRQQGLPFCTVCGYRCSSPERTRGRCAVGKVRVAGGGGAPGGGAGMRCCGCRERNINKELELF.

Residues 1–62 form a disordered region; that stretch reads MRMYSSDAHE…ASGVGSSCKR (62 aa). Positions 21–30 are enriched in pro residues; that stretch reads PPHPLPPTGS.

This is an uncharacterized protein from Homo sapiens (Human).